Reading from the N-terminus, the 324-residue chain is Spheroidene monooxygenase (324 aa).

The segment at 226–324 (GKDPVGEALT…PGKGGRKENA (99 aa)) is disordered. Composition is skewed to low complexity over residues 248–278 (PAAA…VEMP) and 287–313 (VVEA…NFKG).

The protein belongs to the CrtA family. Requires heme as cofactor.

It catalyses the reaction spheroidene + 4 reduced [2Fe-2S]-[ferredoxin] + 2 O2 + 4 H(+) = spheroiden-2-one + 4 oxidized [2Fe-2S]-[ferredoxin] + 3 H2O. It carries out the reaction spheroidene + 2 reduced [2Fe-2S]-[ferredoxin] + O2 + 2 H(+) = 2-hydroxyspheroidene + 2 oxidized [2Fe-2S]-[ferredoxin] + H2O. The catalysed reaction is 2-hydroxyspheroidene + 2 reduced [2Fe-2S]-[ferredoxin] + O2 + 2 H(+) = 2,2-dihydroxyspheroidene + 2 oxidized [2Fe-2S]-[ferredoxin] + H2O. The enzyme catalyses 2,2-dihydroxyspheroidene = spheroiden-2-one + H2O. The protein operates within carotenoid biosynthesis; spheroidene biosynthesis. Functionally, involved in the biosynthesis of the carotenoid spheroidene. Catalyzes the introduction of one keto group at the C-2 position of spheroidene. In vitro, can use nonnative substrates and produce oxocarotenoids with a hydroxy and/or a keto group, derived from neurosporene, lycopene, 3,4-didehydrolycopene or 3,4,3',4'-tetradehydrolycopene. This is Spheroidene monooxygenase from Cereibacter sphaeroides (strain ATCC 17023 / DSM 158 / JCM 6121 / CCUG 31486 / LMG 2827 / NBRC 12203 / NCIMB 8253 / ATH 2.4.1.) (Rhodobacter sphaeroides).